Here is a 304-residue protein sequence, read N- to C-terminus: UDP-3-O-acyl-N-acetylglucosamine deacetylase (304 aa).

Zn(2+)-binding residues include histidine 78, histidine 237, and aspartate 241. The active-site Proton donor is histidine 264.

Belongs to the LpxC family. Requires Zn(2+) as cofactor.

It catalyses the reaction a UDP-3-O-[(3R)-3-hydroxyacyl]-N-acetyl-alpha-D-glucosamine + H2O = a UDP-3-O-[(3R)-3-hydroxyacyl]-alpha-D-glucosamine + acetate. It functions in the pathway glycolipid biosynthesis; lipid IV(A) biosynthesis; lipid IV(A) from (3R)-3-hydroxytetradecanoyl-[acyl-carrier-protein] and UDP-N-acetyl-alpha-D-glucosamine: step 2/6. Catalyzes the hydrolysis of UDP-3-O-myristoyl-N-acetylglucosamine to form UDP-3-O-myristoylglucosamine and acetate, the committed step in lipid A biosynthesis. This Thioalkalivibrio sulfidiphilus (strain HL-EbGR7) protein is UDP-3-O-acyl-N-acetylglucosamine deacetylase.